Here is a 239-residue protein sequence, read N- to C-terminus: MLTRKQQELLLFIHERMKESGVPPSFDEMKDALDLASKSGIHRLITALEERGFIRRLPNRARALEVIKLPEAYNPSLQPRRGFSPSVIEGSLGKPQPVAAPAAPKPVADNGNSISVPVMGRIAAGVPISAIQNNTHDIVVPADMLGSGEHYALEVKGDSMIDAGIFDGDTVIIRNGSTASPGDIVVALVDDEEATLKRFRRKGASIALEAANPAYETRIFGPDRVKVQGKLVGLIRRYH.

Positions 26–46 form a DNA-binding region, H-T-H motif; sequence FDEMKDALDLASKSGIHRLIT. Active-site for autocatalytic cleavage activity residues include Ser159 and Lys197.

It belongs to the peptidase S24 family. In terms of assembly, homodimer.

It carries out the reaction Hydrolysis of Ala-|-Gly bond in repressor LexA.. In terms of biological role, represses a number of genes involved in the response to DNA damage (SOS response), including recA and lexA. In the presence of single-stranded DNA, RecA interacts with LexA causing an autocatalytic cleavage which disrupts the DNA-binding part of LexA, leading to derepression of the SOS regulon and eventually DNA repair. In Rhizobium etli (strain ATCC 51251 / DSM 11541 / JCM 21823 / NBRC 15573 / CFN 42), this protein is LexA repressor.